The chain runs to 120 residues: Aspartate 1-decarboxylase (120 aa).

Residue serine 25 is the Schiff-base intermediate with substrate; via pyruvic acid of the active site. Serine 25 carries the pyruvic acid (Ser) modification. Threonine 57 serves as a coordination point for substrate. Tyrosine 58 (proton donor) is an active-site residue. 73-75 (GAA) contributes to the substrate binding site.

The protein belongs to the PanD family. Heterooctamer of four alpha and four beta subunits. It depends on pyruvate as a cofactor. Is synthesized initially as an inactive proenzyme, which is activated by self-cleavage at a specific serine bond to produce a beta-subunit with a hydroxyl group at its C-terminus and an alpha-subunit with a pyruvoyl group at its N-terminus.

The protein resides in the cytoplasm. It carries out the reaction L-aspartate + H(+) = beta-alanine + CO2. Its pathway is cofactor biosynthesis; (R)-pantothenate biosynthesis; beta-alanine from L-aspartate: step 1/1. Its function is as follows. Catalyzes the pyruvoyl-dependent decarboxylation of aspartate to produce beta-alanine. The polypeptide is Aspartate 1-decarboxylase (Deinococcus deserti (strain DSM 17065 / CIP 109153 / LMG 22923 / VCD115)).